The following is a 263-amino-acid chain: Ribonuclease HII (263 aa).

An RNase H type-2 domain is found at 71–262 (QAIAGIDEVG…VKSMCCNSTN (192 aa)). Asp-77, Glu-78, and Asp-172 together coordinate a divalent metal cation.

Belongs to the RNase HII family. Requires Mn(2+) as cofactor. The cofactor is Mg(2+).

The protein localises to the cytoplasm. The catalysed reaction is Endonucleolytic cleavage to 5'-phosphomonoester.. In terms of biological role, endonuclease that specifically degrades the RNA of RNA-DNA hybrids. This chain is Ribonuclease HII, found in Streptococcus pyogenes serotype M2 (strain MGAS10270).